Consider the following 743-residue polypeptide: Mitochondrial exoribonuclease DSS-1 (743 aa).

A mitochondrion-targeting transit peptide spans M1–L67. An RNB domain is found at T186–W542. The disordered stretch occupies residues V320–P357. A compositionally biased stretch (basic and acidic residues) spans H325–K344.

This sequence belongs to the RNR ribonuclease family. Component of the mitochondrial 3' processome (MPsome) complex composed at least of terminal uridylyltransferase KRET1/TUT1, 3'-5' exonuclease DSS1, MPSS1, MPSS2 and MPSS3. Within the complex, interacts with KRET1 and MPSS2. Component of the mitochondrial degradosome complex composed at least of 3'-5' exonuclease DSS1 and helicase SUV3. Within the complex, interacts with helicase SUV3.

The protein localises to the mitochondrion. It catalyses the reaction Exonucleolytic cleavage in the 3'- to 5'-direction to yield nucleoside 5'-phosphates.. 3'-5'exoribonuclease which is involved in the post-transcriptional processing, editing and degradation of mitochondrial RNAs, including mRNAs, rRNAs and guided RNAs (gRNA). As part of the mitochondrial 3' processome (MPsome), involved in the maturation of guided RNA (gRNA) precursors by catalyzing the processive 3'-5' degradation of uridylated gRNA precursors. Plays a role in the degradation of 12S rRNA processing intermediates and maturation by-products. This is Mitochondrial exoribonuclease DSS-1 from Trypanosoma brucei brucei.